The chain runs to 151 residues: MQIWVDADACPKAVKEILFKTAMRREVKLTLVANQYMNIPTSPFIDTIKVGAGFDVADNEIVKLCNAGDLVITADIPLADKIVEKGATGLNPRGELYTEDNIKGILSMRNLMEELRSAGTVSGGPAAFSPKDKQNFTNQLDKFLTRSLNRI.

This sequence belongs to the UPF0178 family.

The chain is UPF0178 protein Desal_2673 from Maridesulfovibrio salexigens (strain ATCC 14822 / DSM 2638 / NCIMB 8403 / VKM B-1763) (Desulfovibrio salexigens).